We begin with the raw amino-acid sequence, 234 residues long: Sugar fermentation stimulation protein A (234 aa).

Residues 201 to 220 constitute a DNA-binding region (H-T-H motif); it reads LLSEAQQRGVEILAYKAELS.

It belongs to the SfsA family.

In terms of biological role, binds to DNA non-specifically. Could be a regulatory factor involved in maltose metabolism. The protein is Sugar fermentation stimulation protein A of Escherichia coli (strain SMS-3-5 / SECEC).